We begin with the raw amino-acid sequence, 1388 residues long: Peroxisomal ATPase PEX6 (1388 aa).

Disordered regions lie at residues 1–29, 169–192, 262–287, 302–323, and 346–365; these read MTTS…PALS, EGTF…DTPE, RGQS…DDTA, DAAT…SGVD, and TTAS…IGRG. Residues 14–23 show a composition bias toward basic residues; that stretch reads RSPRTRRRRQ. Residues 169–178 show a composition bias toward basic and acidic residues; sequence EGTFFRDRPN. Positions 310-323 are enriched in acidic residues; that stretch reads TVTETEESDLSGVD. Positions 346–358 are enriched in polar residues; it reads TTASGVSTMQPGT. 1034 to 1041 contacts ATP; that stretch reads GPPGTGKT. The disordered stretch occupies residues 1297-1388; the sequence is GPPEKDRQQQ…GTASDDEGLY (92 aa). The span at 1319 to 1332 shows a compositional bias: low complexity; it reads VSGSSVVSKGKGKA.

This sequence belongs to the AAA ATPase family. As to quaternary structure, interacts with PEX1; forming the PEX1-PEX6 AAA ATPase complex, which is composed of a heterohexamer formed by a trimer of PEX1-PEX6 dimers.

It is found in the cytoplasm. The protein localises to the cytosol. The protein resides in the peroxisome membrane. The catalysed reaction is ATP + H2O = ADP + phosphate + H(+). Component of the PEX1-PEX6 AAA ATPase complex, a protein dislocase complex that mediates the ATP-dependent extraction of the PEX5 receptor from peroxisomal membranes, an essential step for PEX5 recycling. Specifically recognizes PEX5 monoubiquitinated at 'Cys-6', and pulls it out of the peroxisome lumen through the PEX2-PEX10-PEX12 retrotranslocation channel. Extraction by the PEX1-PEX6 AAA ATPase complex is accompanied by unfolding of the TPR repeats and release of bound cargo from PEX5. This chain is Peroxisomal ATPase PEX6 (PEX6), found in Colletotrichum orbiculare (strain 104-T / ATCC 96160 / CBS 514.97 / LARS 414 / MAFF 240422) (Cucumber anthracnose fungus).